We begin with the raw amino-acid sequence, 139 residues long: Cofilin (139 aa).

The ADF-H domain occupies 4–135; sequence GVKVSQECLD…SYDTVLDKVS (132 aa).

The protein belongs to the actin-binding proteins ADF family.

It is found in the cytoplasm. Its subcellular location is the cytoskeleton. The protein resides in the nucleus matrix. Its function is as follows. Controls reversibly actin polymerization and depolymerization in a pH-sensitive manner. It has the ability to bind G- and F-actin in a 1:1 ratio of cofilin to actin. Binding to F-actin is regulated by tropomyosin. It is the major component of intranuclear and cytoplasmic actin rods. Required for accumulation of actin at the cell division site via depolymerizing actin at the cell ends. In association with myosin II has a role in the assembly of the contractile ring via severing actin filaments. Involved in the maintenance of the contractile ring once formed. In association with profilin and capping protein, has a role in the mitotic reorganization of the actin cytoskeleton. The protein is Cofilin (COF1) of Mycosarcoma maydis (Corn smut fungus).